Here is a 374-residue protein sequence, read N- to C-terminus: Anhydro-N-acetylmuramic acid kinase (374 aa).

Gly-15 to Asp-22 is an ATP binding site.

It belongs to the anhydro-N-acetylmuramic acid kinase family.

It catalyses the reaction 1,6-anhydro-N-acetyl-beta-muramate + ATP + H2O = N-acetyl-D-muramate 6-phosphate + ADP + H(+). The protein operates within amino-sugar metabolism; 1,6-anhydro-N-acetylmuramate degradation. Its pathway is cell wall biogenesis; peptidoglycan recycling. Catalyzes the specific phosphorylation of 1,6-anhydro-N-acetylmuramic acid (anhMurNAc) with the simultaneous cleavage of the 1,6-anhydro ring, generating MurNAc-6-P. Is required for the utilization of anhMurNAc either imported from the medium or derived from its own cell wall murein, and thus plays a role in cell wall recycling. The protein is Anhydro-N-acetylmuramic acid kinase of Xanthomonas axonopodis pv. citri (strain 306).